A 103-amino-acid polypeptide reads, in one-letter code: Large ribosomal subunit protein uL24 (103 aa).

Belongs to the universal ribosomal protein uL24 family. As to quaternary structure, part of the 50S ribosomal subunit.

One of two assembly initiator proteins, it binds directly to the 5'-end of the 23S rRNA, where it nucleates assembly of the 50S subunit. Its function is as follows. One of the proteins that surrounds the polypeptide exit tunnel on the outside of the subunit. The chain is Large ribosomal subunit protein uL24 from Pediococcus pentosaceus (strain ATCC 25745 / CCUG 21536 / LMG 10740 / 183-1w).